The primary structure comprises 297 residues: UDP-3-O-acyl-N-acetylglucosamine deacetylase (297 aa).

Residues His77, His236, and Asp240 each contribute to the Zn(2+) site. The active-site Proton donor is His263.

It belongs to the LpxC family. The cofactor is Zn(2+).

It carries out the reaction a UDP-3-O-[(3R)-3-hydroxyacyl]-N-acetyl-alpha-D-glucosamine + H2O = a UDP-3-O-[(3R)-3-hydroxyacyl]-alpha-D-glucosamine + acetate. It functions in the pathway glycolipid biosynthesis; lipid IV(A) biosynthesis; lipid IV(A) from (3R)-3-hydroxytetradecanoyl-[acyl-carrier-protein] and UDP-N-acetyl-alpha-D-glucosamine: step 2/6. Its function is as follows. Catalyzes the hydrolysis of UDP-3-O-myristoyl-N-acetylglucosamine to form UDP-3-O-myristoylglucosamine and acetate, the committed step in lipid A biosynthesis. In Psychrobacter sp. (strain PRwf-1), this protein is UDP-3-O-acyl-N-acetylglucosamine deacetylase.